A 310-amino-acid chain; its full sequence is MEAENHTTVAELIILGLTEDPKLCIVFFVIFLGVYIVTLVGNISIITLIRISSQLHTPMYLFLSHLAFVDILYSTSVSVIMHMELLGHGLALPVAACAAQLCITVSFGSAECFLLAAMAYDRYVAICSPLLYSTLMSPRVCFLLLGMSYVGGCMNGWTFTGCLLSLSFCGPNQIDHFFCDFSPLLKLSCSDVSIIGIIPSISSGSIIVVTVFVIAVSYIYILITILNMRSTEGRHKAFSTCTSHLTAVTLYYGTITFIYVMPKSNYSTEQNKVLSVFYTVVIPMLNPLIYSLRNRDVKEALRKATVRVYS.

The Extracellular segment spans residues 1-25 (MEAENHTTVAELIILGLTEDPKLCI). Asn5 carries N-linked (GlcNAc...) asparagine glycosylation. A helical membrane pass occupies residues 26–46 (VFFVIFLGVYIVTLVGNISII). The Cytoplasmic portion of the chain corresponds to 47–54 (TLIRISSQ). The chain crosses the membrane as a helical span at residues 55-75 (LHTPMYLFLSHLAFVDILYST). At 76-99 (SVSVIMHMELLGHGLALPVAACAA) the chain is on the extracellular side. Cys97 and Cys189 form a disulfide bridge. The chain crosses the membrane as a helical span at residues 100 to 120 (QLCITVSFGSAECFLLAAMAY). The Cytoplasmic segment spans residues 121–133 (DRYVAICSPLLYS). A helical membrane pass occupies residues 134-154 (TLMSPRVCFLLLGMSYVGGCM). Residues 155–196 (NGWTFTGCLLSLSFCGPNQIDHFFCDFSPLLKLSCSDVSIIG) lie on the Extracellular side of the membrane. Residues 197–217 (IIPSISSGSIIVVTVFVIAVS) traverse the membrane as a helical segment. The Cytoplasmic portion of the chain corresponds to 218 to 237 (YIYILITILNMRSTEGRHKA). The chain crosses the membrane as a helical span at residues 238-258 (FSTCTSHLTAVTLYYGTITFI). The Extracellular portion of the chain corresponds to 259–271 (YVMPKSNYSTEQN). A glycan (N-linked (GlcNAc...) asparagine) is linked at Asn265. Residues 272 to 292 (KVLSVFYTVVIPMLNPLIYSL) traverse the membrane as a helical segment. The Cytoplasmic segment spans residues 293–310 (RNRDVKEALRKATVRVYS).

This sequence belongs to the G-protein coupled receptor 1 family.

The protein localises to the cell membrane. In terms of biological role, potential odorant receptor. This chain is Olfactory receptor 5P53, found in Mus musculus (Mouse).